The primary structure comprises 217 residues: Nascent polypeptide-associated complex subunit alpha-like protein 2 (217 aa).

The interval 1–81 is disordered; that stretch reads MSPPPAVVTE…SEKKSRKAML (81 aa). Acidic residues predominate over residues 37–60; that stretch reads PIVEDVKDDEDDDDDDEEEEDDDA. Residues 70–135 enclose the NAC-A/B domain; it reads SRSEKKSRKA…AKIEDLSSQL (66 aa). Positions 178–215 constitute a UBA domain; that stretch reads VEARDIDLVMTQAGVSRSKAVKALKSHDGDIVSAIMEL.

It belongs to the NAC-alpha family.

May promote appropriate targeting of ribosome-nascent polypeptide complexes. This chain is Nascent polypeptide-associated complex subunit alpha-like protein 2, found in Arabidopsis thaliana (Mouse-ear cress).